We begin with the raw amino-acid sequence, 417 residues long: Citrate synthase-related protein DDB_G0287281 (417 aa).

Residues 284-317 form a disordered region; the sequence is NKNNNNNNNNNNNNNNNNNNNNNNNNSEDDDDDN. Residues 286–309 show a composition bias toward low complexity; sequence NNNNNNNNNNNNNNNNNNNNNNNN.

This sequence belongs to the citrate synthase family.

The polypeptide is Citrate synthase-related protein DDB_G0287281 (Dictyostelium discoideum (Social amoeba)).